The chain runs to 509 residues: Ribonuclease Y (509 aa).

Residues 5–25 traverse the membrane as a helical segment; sequence IIILLSVFCGIFFICFIICSS. The 61-residue stretch at 199–259 folds into the KH domain; sequence TTNIVKLPSD…IRREIATRTL (61 aa). The 94-residue stretch at 325-418 folds into the HD domain; sequence VLAHSIEVAK…VAIADSISAS (94 aa).

This sequence belongs to the RNase Y family.

It localises to the cell membrane. In terms of biological role, endoribonuclease that initiates mRNA decay. The polypeptide is Ribonuclease Y (Mycoplasma mycoides subsp. mycoides SC (strain CCUG 32753 / NCTC 10114 / PG1)).